The sequence spans 504 residues: MKAMLLALTGGILLPFAFAPFGYALVAPLSLALLFRVWLNASPSKAALYGYLFGLGQFGIGVSWVFVSMYEYGGSDVFSAAGLTALFVAYLALFPALAGWLGVKAGGGSILVRTLLVFPAAWVVTEWLRGWLFSGFPWLQIGYSQTDTGLRSIAPVFGVFGVGWLLAVLAGLLLSAWLLDRRGRRFALLGAAVVLVGSTQFAKVQWTHPAGDPIRVTLLQGNVPQDQKWRPEAKTTTVQMYVDMTRQHWDSRLIIWPETAVPAFYQQVAESFLAPLEAEARQHGVDVLVGVPYYEAQGNRYYNALVTLGAKPGRYFKRHLVPFGEFLPLRPVLAFVLDILQIPLADFTAGAHRQTLLQAAGYPLIASICYEDIFGQESLTGLPEGAYLVNVTNDAWFGDSFAPHQHWQKARMRALETGRYMLRATNTGVTGIIDAGGRPVAVAPMFEREALTGMMQPMAGATPYALWGDWPAIGLCAGIVGICFARRRRNASSHQGRQAEPGRN.

6 helical membrane-spanning segments follow: residues 6-26 (LALT…YALV), 47-67 (ALYG…WVFV), 83-103 (LTAL…WLGV), 105-125 (AGGG…WVVT), 153-173 (IAPV…AGLL), and 186-206 (FALL…KVQW). In terms of domain architecture, CN hydrolase spans 219–457 (LQGNVPQDQK…REALTGMMQP (239 aa)). Catalysis depends on E258, which acts as the Proton acceptor. Residue K317 is part of the active site. C369 serves as the catalytic Nucleophile. Residues 465 to 485 (ALWGDWPAIGLCAGIVGICFA) traverse the membrane as a helical segment.

Belongs to the CN hydrolase family. Apolipoprotein N-acyltransferase subfamily.

The protein localises to the cell inner membrane. The catalysed reaction is N-terminal S-1,2-diacyl-sn-glyceryl-L-cysteinyl-[lipoprotein] + a glycerophospholipid = N-acyl-S-1,2-diacyl-sn-glyceryl-L-cysteinyl-[lipoprotein] + a 2-acyl-sn-glycero-3-phospholipid + H(+). Its pathway is protein modification; lipoprotein biosynthesis (N-acyl transfer). Functionally, catalyzes the phospholipid dependent N-acylation of the N-terminal cysteine of apolipoprotein, the last step in lipoprotein maturation. The protein is Apolipoprotein N-acyltransferase of Methylococcus capsulatus (strain ATCC 33009 / NCIMB 11132 / Bath).